The sequence spans 310 residues: tRNA dimethylallyltransferase 2 (310 aa).

Position 15–22 (15–22 (GPTASGKT)) interacts with ATP. 17–22 (TASGKT) lines the substrate pocket. The segment at 40 to 43 (DSMQ) is interaction with substrate tRNA.

The protein belongs to the IPP transferase family. In terms of assembly, monomer. The cofactor is Mg(2+).

The enzyme catalyses adenosine(37) in tRNA + dimethylallyl diphosphate = N(6)-dimethylallyladenosine(37) in tRNA + diphosphate. Catalyzes the transfer of a dimethylallyl group onto the adenine at position 37 in tRNAs that read codons beginning with uridine, leading to the formation of N6-(dimethylallyl)adenosine (i(6)A). In Geotalea uraniireducens (strain Rf4) (Geobacter uraniireducens), this protein is tRNA dimethylallyltransferase 2.